Consider the following 149-residue polypeptide: UPF0179 protein MM_0589 (149 aa).

The protein belongs to the UPF0179 family.

In Methanosarcina mazei (strain ATCC BAA-159 / DSM 3647 / Goe1 / Go1 / JCM 11833 / OCM 88) (Methanosarcina frisia), this protein is UPF0179 protein MM_0589.